The primary structure comprises 392 residues: Pectate lyase 3 (392 aa).

An N-terminal signal peptide occupies residues 1–25 (MGIKHCCYILYFTLALVTLLQPVRS). N-linked (GlcNAc...) asparagine glycosylation occurs at N37. A disulfide bridge links C54 with C71. Ca(2+)-binding residues include D194, D218, and D222. Residue R270 is part of the active site.

The protein belongs to the polysaccharide lyase 1 family. Amb a subfamily. In terms of assembly, monomer. It depends on Ca(2+) as a cofactor. In terms of processing, the N-terminus is blocked. In terms of tissue distribution, pollen and flowers.

It catalyses the reaction Eliminative cleavage of (1-&gt;4)-alpha-D-galacturonan to give oligosaccharides with 4-deoxy-alpha-D-galact-4-enuronosyl groups at their non-reducing ends.. It participates in glycan metabolism; pectin degradation; 2-dehydro-3-deoxy-D-gluconate from pectin: step 2/5. Its function is as follows. Has pectate lyase activity. This is Pectate lyase 3 from Ambrosia artemisiifolia (Common ragweed).